A 263-amino-acid polypeptide reads, in one-letter code: Type II restriction enzyme TaqI (263 aa).

Post-translationally, only 15% of purified enzyme (upon expression in E.coli) can be sequenced, suggesting the remainder has a blocked N-terminus.

The enzyme catalyses Endonucleolytic cleavage of DNA to give specific double-stranded fragments with terminal 5'-phosphates.. A P subtype restriction enzyme that recognizes the double-stranded sequence 5'-TCGA-3' and cleaves after T-1. The polypeptide is Type II restriction enzyme TaqI (taqIR) (Thermus aquaticus).